The chain runs to 75 residues: Penaeidin-3m (75 aa).

The first 19 residues, 1-19, serve as a signal peptide directing secretion; the sequence is MRLVVCLVFLASFALVCQG. Q20 is subject to Pyrrolidone carboxylic acid. 3 disulfide bridges follow: C44–C59, C48–C66, and C60–C67. S74 is subject to Serine amide.

It belongs to the penaeidin family.

The protein localises to the cytoplasmic granule. In terms of biological role, antibacterial and antifungal activity. Presents chitin-binding activity. This is Penaeidin-3m from Penaeus setiferus (Atlantic white shrimp).